The primary structure comprises 141 residues: ATP synthase epsilon chain (141 aa).

This sequence belongs to the ATPase epsilon chain family. In terms of assembly, F-type ATPases have 2 components, CF(1) - the catalytic core - and CF(0) - the membrane proton channel. CF(1) has five subunits: alpha(3), beta(3), gamma(1), delta(1), epsilon(1). CF(0) has three main subunits: a, b and c.

It is found in the cell inner membrane. Produces ATP from ADP in the presence of a proton gradient across the membrane. The sequence is that of ATP synthase epsilon chain from Desulfatibacillum aliphaticivorans.